A 69-amino-acid polypeptide reads, in one-letter code: Large ribosomal subunit protein bL31 (69 aa).

Cys-16, Cys-18, Cys-36, and Cys-39 together coordinate Zn(2+).

This sequence belongs to the bacterial ribosomal protein bL31 family. Type A subfamily. As to quaternary structure, part of the 50S ribosomal subunit. The cofactor is Zn(2+).

Functionally, binds the 23S rRNA. This is Large ribosomal subunit protein bL31 from Kosmotoga olearia (strain ATCC BAA-1733 / DSM 21960 / TBF 19.5.1).